Consider the following 520-residue polypeptide: MSGGLLVAGTASDAGKSVLTAGICRWLAREGVRVAPFKAQNMALNSAVTADGAEIGRAQAMQAAAAGVEPEAAMNPVLLKPGGQRHSQLVVLGRPVAEVDALGYRPYKERLAAIVLECLDDLRGRFDAVICEGAGSPAEINLRSTDIANMGLARAANLPVIVVGDIDKGGVFAALFGTLALLDAADQALVAGWVINRFRGDARLLEPGLRQIERLTGRPVHGVVPWKAGLWLDVEDSLDLAAFPDAEPCPDAEPCPDAEPCPEARPASHGGRREVLRVAVIRLPRLSNVTDIDALRVEPGVAVRLATRPDELADADLVILPGTRSTVEDLRWLRRRGLAAALAERAAAARPVLGICGGYQILGRRIRDDVESGAGEVDGLGLLPVITTFDPVKLLGRRAATDAAGRPLTGYEIRHGRLTVEEHPDSAPFAADGVRVGAVAGTSWHGVLENDAFRRAYLADVATAAGRSFVPAFTCFADARQRRLDALGDLVADHLDTGALRRLLAEGTPAGLPFVPPGAS.

In terms of domain architecture, GATase cobBQ-type spans 275–453 (VLRVAVIRLP…WHGVLENDAF (179 aa)). The active-site Nucleophile is the Cys-356. His-445 is a catalytic residue.

Belongs to the CobB/CobQ family. CobQ subfamily.

Its pathway is cofactor biosynthesis; adenosylcobalamin biosynthesis. In terms of biological role, catalyzes amidations at positions B, D, E, and G on adenosylcobyrinic A,C-diamide. NH(2) groups are provided by glutamine, and one molecule of ATP is hydrogenolyzed for each amidation. This chain is Cobyric acid synthase, found in Frankia casuarinae (strain DSM 45818 / CECT 9043 / HFP020203 / CcI3).